A 185-amino-acid polypeptide reads, in one-letter code: Ribosome-recycling factor (185 aa).

It belongs to the RRF family.

The protein localises to the cytoplasm. Responsible for the release of ribosomes from messenger RNA at the termination of protein biosynthesis. May increase the efficiency of translation by recycling ribosomes from one round of translation to another. The chain is Ribosome-recycling factor from Corynebacterium kroppenstedtii (strain DSM 44385 / JCM 11950 / CIP 105744 / CCUG 35717).